The sequence spans 460 residues: V-type ATP synthase beta chain (460 aa).

This sequence belongs to the ATPase alpha/beta chains family.

Its function is as follows. Produces ATP from ADP in the presence of a proton gradient across the membrane. The V-type beta chain is a regulatory subunit. This is V-type ATP synthase beta chain from Acetivibrio thermocellus (strain ATCC 27405 / DSM 1237 / JCM 9322 / NBRC 103400 / NCIMB 10682 / NRRL B-4536 / VPI 7372) (Clostridium thermocellum).